The following is a 484-amino-acid chain: Cysteine--tRNA ligase (484 aa).

Residue cysteine 29 coordinates Zn(2+). Residues 31–41 (ITVYDYCHLGH) carry the 'HIGH' region motif. Cysteine 215, histidine 240, and glutamate 244 together coordinate Zn(2+). The short motif at 272–276 (KMSKS) is the 'KMSKS' region element. Lysine 275 serves as a coordination point for ATP.

Belongs to the class-I aminoacyl-tRNA synthetase family. In terms of assembly, monomer. Zn(2+) is required as a cofactor.

It localises to the cytoplasm. The enzyme catalyses tRNA(Cys) + L-cysteine + ATP = L-cysteinyl-tRNA(Cys) + AMP + diphosphate. The chain is Cysteine--tRNA ligase from Rippkaea orientalis (strain PCC 8801 / RF-1) (Cyanothece sp. (strain PCC 8801)).